We begin with the raw amino-acid sequence, 438 residues long: Keratin, type I cytoskeletal 13 (438 aa).

A head region spans residues 1-95 (MSCRFQSSSM…SVDGGLLSGN (95 aa)). An omega-N-methylarginine mark is found at Arg-27 and Arg-35. A coil region spans residues 96-131 (EKITMQNLNDRLASYLEKVRALEAANADLEVKIRDW). One can recognise an IF rod domain in the interval 96-408 (EKITMQNLND…SLLEGQDAKM (313 aa)). Residues 132 to 150 (HLKQSPTSPERDYSAYYKT) form a linker 1 region. A coil 1B region spans residues 151-242 (IEELRIKILE…KNHEEEMKEF (92 aa)). The tract at residues 243–265 (SNQAVGQVNVEMDATPGIDLTRV) is linker 12. Residues 266-404 (LAEMREQYEA…ATYRSLLEGQ (139 aa)) form a coil 2 region. Residues 405-438 (DAKMTGFNTGGNSTTTSNTSTSPSTSGRPDFRKY) form a tail region. Residues 408–438 (MTGFNTGGNSTTTSNTSTSPSTSGRPDFRKY) are disordered. The segment covering 409–431 (TGFNTGGNSTTTSNTSTSPSTSG) has biased composition (low complexity).

Belongs to the intermediate filament family. Heterotetramer of two type I and two type II keratins. Post-translationally, O-glycosylated; glycans consist of single N-acetylglucosamine residues.

Type 1 keratin. Maintains postnatal tongue mucosal cell homeostasis and tissue organization in response to mechanical stress, potentially via regulation of the G1/S phase cyclins CCNE1 and CCNE2. This Rattus norvegicus (Rat) protein is Keratin, type I cytoskeletal 13.